Here is an 866-residue protein sequence, read N- to C-terminus: Scm-like with four MBT domains protein 1 (866 aa).

4 MBT repeats span residues 20 to 120 (LSWE…LEAP), 128 to 232 (SDWD…LQPP), 242 to 348 (AEWQ…ISPP), and 356 to 453 (FDWA…LSTP). The antigenic epitope stretch occupies residues 34–42 (VPYGSFKHV). Residues 641-777 (KKKNKRIGRP…DDENKPPSPK (137 aa)) form a disordered region. A compositionally biased stretch (basic residues) spans 663–682 (KASKRRKRRKNVFVHKKKRS). Positions 683-694 (SASVDNTPAGSP) are enriched in polar residues. Acidic residues-rich tracts occupy residues 699 to 713 (GEDE…DDSL) and 721 to 730 (QQDELQEESE). Over residues 737 to 749 (CSSSPTQSEISTS) the composition is skewed to low complexity. A phosphoserine mark is found at S767 and S775. The 69-residue stretch at 796 to 864 (WSVADVVRFI…RIKFAFYEQF (69 aa)) folds into the SAM domain.

Interacts with MYOD1. Component of the SLC (SFMBT1-LSD1-CoREST) corepressor complex, which also contains KDM1A/LSD1 and RCOR1/CoREST. Interacts with KDM1A/LSD1 and RCOR1/CoREST. Interacts with L3MBTL3. Expressed in all cell lines and normal tissues tested, including the thymus.

It localises to the nucleus. Its function is as follows. Histone-binding protein, which is part of various corepressor complexes. Mediates the recruitment of corepressor complexes to target genes, followed by chromatin compaction and repression of transcription. Plays a role during myogenesis: required for the maintenance of undifferentiated states of myogenic progenitor cells via interaction with MYOD1. Interaction with MYOD1 leads to the recruitment of associated corepressors and silencing of MYOD1 target genes. Part of the SLC complex in germ cells, where it may play a role during spermatogenesis. In Homo sapiens (Human), this protein is Scm-like with four MBT domains protein 1 (SFMBT1).